The following is a 209-amino-acid chain: Kynurenine formamidase (209 aa).

A substrate-binding site is contributed by Trp-19. The Zn(2+) site is built by His-49, His-53, and Asp-55. Catalysis depends on His-59, which acts as the Proton donor/acceptor. Zn(2+) contacts are provided by His-160 and Glu-172.

It belongs to the Cyclase 1 superfamily. KynB family. In terms of assembly, homodimer. Requires Zn(2+) as cofactor.

It carries out the reaction N-formyl-L-kynurenine + H2O = L-kynurenine + formate + H(+). It participates in amino-acid degradation; L-tryptophan degradation via kynurenine pathway; L-kynurenine from L-tryptophan: step 2/2. Catalyzes the hydrolysis of N-formyl-L-kynurenine to L-kynurenine, the second step in the kynurenine pathway of tryptophan degradation. The protein is Kynurenine formamidase of Ralstonia pickettii (strain 12J).